Consider the following 92-residue polypeptide: Large ribosomal subunit protein eL43 (92 aa).

The C4-type zinc-finger motif lies at 39 to 60 (CSFCGKDSMKRAVVGIWSCKRC).

Belongs to the eukaryotic ribosomal protein eL43 family.

The polypeptide is Large ribosomal subunit protein eL43 (RpL37A) (Drosophila melanogaster (Fruit fly)).